Consider the following 349-residue polypeptide: Quinone oxidoreductase-like protein 2 (349 aa).

Residue lysine 35 is modified to N6-acetyllysine. Lysine 200 is modified (N6-succinyllysine).

This sequence belongs to the zinc-containing alcohol dehydrogenase family. Quinone oxidoreductase subfamily.

This chain is Quinone oxidoreductase-like protein 2, found in Bos taurus (Bovine).